The sequence spans 161 residues: Large ribosomal subunit protein uL15 (161 aa).

The segment covering 1 to 10 (MKLNELRDNP) has biased composition (basic and acidic residues). The disordered stretch occupies residues 1-42 (MKLNELRDNPGARPKSKRLGRGIGSGKGKTSGKGVKGQKARE). Residues 21–35 (RGIGSGKGKTSGKGV) are compositionally biased toward gly residues.

It belongs to the universal ribosomal protein uL15 family. In terms of assembly, part of the 50S ribosomal subunit.

Functionally, binds to the 23S rRNA. The polypeptide is Large ribosomal subunit protein uL15 (Acidiphilium cryptum (strain JF-5)).